The chain runs to 505 residues: Mannosylglucosyl-3-phosphoglycerate synthase (505 aa).

As to quaternary structure, monomer in solution.

The catalysed reaction is (2R)-2-O-(alpha-D-glucopyranosyl)-3-phospho-glycerate + GDP-alpha-D-mannose = (2R)-2-O-[alpha-D-mannopyranosyl-(1-&gt;2)-alpha-D-glucopyranosyl]-3-phospho-glycerate + GDP + H(+). Its activity is regulated as follows. Not strictly dependent on divalent cations, but the presence of Mn(2+), Ca(2+), Mg(2+) or Co(2+) stimulates activity. Its function is as follows. Involved in the biosynthesis of the compatible solute mannosylglucosylglycerate through a phosphorylating pathway. Catalyzes the conversion of glucosyl-3-phosphoglycerate (GPG) to mannosylglucosyl-3-phosphoglycerate (MGPG). In Petrotoga mobilis (strain DSM 10674 / SJ95), this protein is Mannosylglucosyl-3-phosphoglycerate synthase.